Here is a 459-residue protein sequence, read N- to C-terminus: tRNA modification GTPase MnmE (459 aa).

Residues R20, E85, and R124 each contribute to the (6S)-5-formyl-5,6,7,8-tetrahydrofolate site. Positions 221 to 380 (GISTVIIGRP…LEEAIQSLFF (160 aa)) constitute a TrmE-type G domain. N231 serves as a coordination point for K(+). GTP is bound by residues 231-236 (NVGKSS), 250-256 (TDIPGTT), and 275-278 (DTAG). A Mg(2+)-binding site is contributed by S235. Positions 250, 252, and 255 each coordinate K(+). Residue T256 participates in Mg(2+) binding. Residue K459 participates in (6S)-5-formyl-5,6,7,8-tetrahydrofolate binding.

It belongs to the TRAFAC class TrmE-Era-EngA-EngB-Septin-like GTPase superfamily. TrmE GTPase family. Homodimer. Heterotetramer of two MnmE and two MnmG subunits. K(+) is required as a cofactor.

Its subcellular location is the cytoplasm. Functionally, exhibits a very high intrinsic GTPase hydrolysis rate. Involved in the addition of a carboxymethylaminomethyl (cmnm) group at the wobble position (U34) of certain tRNAs, forming tRNA-cmnm(5)s(2)U34. The chain is tRNA modification GTPase MnmE from Bacillus licheniformis (strain ATCC 14580 / DSM 13 / JCM 2505 / CCUG 7422 / NBRC 12200 / NCIMB 9375 / NCTC 10341 / NRRL NRS-1264 / Gibson 46).